A 732-amino-acid polypeptide reads, in one-letter code: MKQVAGFIGMSQKNKGIQQNQWHSGPPQGLLSGQTKAEQGTSSQQAGVNQGENSKSGAVVQRKMPMRRDVNSAAQRQHVRRLVYTPYFPNETWNISTFKNGAKDVERSVISTLNNVAENRVMDNCTSRVIFEMTQIQFESLPDIIRNEFTRVGDDALKWAVPEDLKSADLDHMMVVKLSTEGTIYPTTLIFPGGCSGMAKLKSVYSFLESQLERIVTPTPSVSLKYVTSWAEHLFDLCSGQLINSQNERVDKLLGYMIWDIEKAITLTDQVIACYNHPEVVLRRLGASDIACAVLAGESVVKLTRLALSKSPVDGCSCCRILELILNLPSRKPNDKVPQVPLDILFASVYRYVSAMCMGRVLNGRIDASGIQSTDHATASIKLNDIIVNDLELRSMGVDKTSSFRGTQSMRAFYVPENLAGSILDRINVLVMRHFGILHMWGFNGVVLQNQEGYCDYHIITGLNHLTTITHTNSMVAVHWGTESRMDNIFEIKARTLPTASETMITLIENALKEQLTSIVKDGLRKGVSFSVKRNINDSRFGFETNSSPAIFLKLRDMLKRAKPFSDLLSLALSKVIKKENAMIQRSITTVEVAVAIKMKVYGLDEYVSLMKVEKKEVESGSLPLQEFLKLKSNAAGAQSSTVAVKMKEEEVNSKAYCLISETIVVNMDAVRSACGVVQSENLVIKSELSGPELSESVTSGLMELLGRNAGPSKSWADQVEEAENEEEKQKE.

2 stretches are compositionally biased toward polar residues: residues 13-23 (KNKGIQQNQWH) and 31-56 (LSGQ…NSKS). Disordered regions lie at residues 13–74 (KNKG…NSAA) and 706–732 (LGRN…KQKE). The span at 719–732 (QVEEAENEEEKQKE) shows a compositional bias: acidic residues.

The polypeptide is Non-structural protein 4 (Catharanthus roseus (Madagascar periwinkle)).